The primary structure comprises 442 residues: MGKKQSEAEILSSNSSNTSPATFKLVGFNNFVRANPKSDHFAVKRFHHIEFWCGDATNTSRRFSWGLGMPLVAKSDLSTGNSVHASYLVRSANLSFVFTAPYSPSTTTSSGSAAIPSFSASGFHSFAAKHGLAVRAIALEVADVAAAFEASVARGARPASAPVELDDQAWLAEVELYGDVVLRFVSFGREEGLFLPGFEAVEGTASFPDLDYGIRRLDHAVGNVTELGPVVEYIKGFTGFHEFAEFTAEDVGTLESGLNSVVLANNEEMVLLPLNEPVYGTKRKSQIQTYLEHNEGAGVQHLALVSEDIFRTLREMRKRSCLGGFEFMPSPPPTYYKNLKNRVGDVLSDEQIKECEDLGILVDRDDQGTLLQIFTKPVGDRPTLFIEIIQRVGCMLKDDAGQMYQKGGCGGFGKGNFSELFKSIEEYEKTLEAKQITGSAAA.

VOC domains are found at residues 45–200 (RFHH…GFEA) and 216–376 (RLDH…IFTK). Fe cation is bound by residues His219, His301, and Glu387.

Belongs to the 4HPPD family. Fe cation is required as a cofactor.

The protein resides in the cytoplasm. The enzyme catalyses 3-(4-hydroxyphenyl)pyruvate + O2 = homogentisate + CO2. It participates in amino-acid degradation; L-phenylalanine degradation; acetoacetate and fumarate from L-phenylalanine: step 3/6. It functions in the pathway cofactor biosynthesis; prenylquinone biosynthesis. This chain is 4-hydroxyphenylpyruvate dioxygenase, found in Daucus carota (Wild carrot).